The chain runs to 141 residues: 3-hydroxyacyl-[acyl-carrier-protein] dehydratase FabZ (141 aa).

His-48 is an active-site residue.

Belongs to the thioester dehydratase family. FabZ subfamily.

It localises to the cytoplasm. The enzyme catalyses a (3R)-hydroxyacyl-[ACP] = a (2E)-enoyl-[ACP] + H2O. In terms of biological role, involved in unsaturated fatty acids biosynthesis. Catalyzes the dehydration of short chain beta-hydroxyacyl-ACPs and long chain saturated and unsaturated beta-hydroxyacyl-ACPs. The polypeptide is 3-hydroxyacyl-[acyl-carrier-protein] dehydratase FabZ (Streptococcus thermophilus (strain CNRZ 1066)).